The following is a 248-amino-acid chain: MALLEICCYSMECALTAQQNGADRVELCAAPKEGGLTPSLGVLKSVRQRVTIPVHPIIRPRGGDFCYSDGEFAAILEDVRTVRELGFPGLVTGVLEVDGNVDMPRMEKIMAAAGPLAVTFHRAFDMCANPLNTLNNLAELGITRVLTSGQKSDALQGLSKIMELIAHRDAPIIMAGAGVRAENLHHFLDAGVLEVHSSAGAWQASPMRYRNQGLSMSSDAHADEYSRYVVDGAAVAEMKGIIECHQAK.

Belongs to the CutC family. Homodimer.

It localises to the cytoplasm. In Escherichia coli O81 (strain ED1a), this protein is PF03932 family protein CutC.